Here is a 273-residue protein sequence, read N- to C-terminus: Serine acetyltransferase (273 aa).

This sequence belongs to the transferase hexapeptide repeat family. In terms of assembly, homohexamer. Dimer of a homotrimer.

It localises to the cytoplasm. It catalyses the reaction L-serine + acetyl-CoA = O-acetyl-L-serine + CoA. The protein operates within amino-acid biosynthesis; L-cysteine biosynthesis; L-cysteine from L-serine: step 1/2. The polypeptide is Serine acetyltransferase (cysE) (Shigella flexneri).